Consider the following 344-residue polypeptide: Meiotic recombination protein DMC1 homolog A (344 aa).

133 to 140 (GEFRSGKT) is an ATP binding site. Arg235 provides a ligand contact to dsDNA. Residues Arg235, Phe238, Arg241, Arg247, and Arg315 each coordinate ssDNA. Residues Arg241 and Arg247 each coordinate dsDNA.

The protein belongs to the RecA family. DMC1 subfamily. As to expression, expressed in meiotic young panicles.

The protein resides in the nucleus. In terms of biological role, recombinase that may participate in meiotic recombination, specifically in homologous strand assimilation, which is required for the resolution of meiotic double-strand breaks. Exhibits DNA-dependent ATPase activity when bound to single-stranded DNA (ssDNA). Mediates renaturation of homologous complementary strands as well as assimilation of single strands into homologous supercoiled duplexes leading to D-loop formation. Binds circular single-stranded DNA (ssDNA) and circular double-stranded DNA (dsDNA) in vitro. Catalyzes DNA homologous renaturation and DNA strand exchange. The rates of these activities are dependent on the state of ATP hydrolysis. Forms helical filaments along ssDNA and dsDNA, and promotes strand exchange between ssDNA and dsDNA with long DNA substrates of several thousand base pairs. The presence of the replication protein A is not required for this activity. Seems to be required for homologous pairing and subsequent chromosome segregation during male meiosis. May be not directly required for homologous pairing during male meiosis. Required for synaptonemal complex assembly and crossover formation. Functions redundantly with DMC1B. In Oryza sativa subsp. japonica (Rice), this protein is Meiotic recombination protein DMC1 homolog A.